The chain runs to 368 residues: Protein RecA (368 aa).

An ATP-binding site is contributed by 72–79 (GNESSGKT).

Belongs to the RecA family.

It is found in the cytoplasm. Its function is as follows. Can catalyze the hydrolysis of ATP in the presence of single-stranded DNA, the ATP-dependent uptake of single-stranded DNA by duplex DNA, and the ATP-dependent hybridization of homologous single-stranded DNAs. It interacts with LexA causing its activation and leading to its autocatalytic cleavage. This is Protein RecA from Petrotoga mobilis (strain DSM 10674 / SJ95).